Here is a 358-residue protein sequence, read N- to C-terminus: Zinc-type alcohol dehydrogenase-like protein YogA (358 aa).

The protein belongs to the zinc-containing alcohol dehydrogenase family. Quinone oxidoreductase subfamily.

It participates in secondary metabolite biosynthesis. In terms of biological role, zinc-type alcohol dehydrogenase-like protein; part of the gene cluster that mediates the biosynthesis of phomenoic acid, a long chain aliphatic carboxylic acid that does not appear to be essential for pathogenicity but may play a role in allowing to outcompete other fungi in the environmental niche via its antifungal properties. The polyketide synthase produces the long methylated aliphatic carboxylic acid chain of phomenoic acid. The cluster-specific cytochrome P450 monooxygenase may then hydroxylate the methyl group of carbon 31. The putative dehydrogenase YogA, which has no obvious role in phomenoic acid biosynthesis, may further modify phomenoic acid to produce a compound not identified yet. The protein is Zinc-type alcohol dehydrogenase-like protein YogA of Leptosphaeria maculans (strain JN3 / isolate v23.1.3 / race Av1-4-5-6-7-8) (Blackleg fungus).